We begin with the raw amino-acid sequence, 84 residues long: Exodeoxyribonuclease 7 small subunit (84 aa).

It belongs to the XseB family. Heterooligomer composed of large and small subunits.

The protein resides in the cytoplasm. The catalysed reaction is Exonucleolytic cleavage in either 5'- to 3'- or 3'- to 5'-direction to yield nucleoside 5'-phosphates.. Its function is as follows. Bidirectionally degrades single-stranded DNA into large acid-insoluble oligonucleotides, which are then degraded further into small acid-soluble oligonucleotides. The protein is Exodeoxyribonuclease 7 small subunit of Herminiimonas arsenicoxydans.